A 405-amino-acid chain; its full sequence is Diaminohydroxyphosphoribosylamino-pyrimidine deaminase (405 aa).

The region spanning 256–383 (YNHEEYMLKA…DLLKKAGIVV (128 aa)) is the CMP/dCMP-type deaminase domain. Residue His-305 participates in Zn(2+) binding. Catalysis depends on Glu-307, which acts as the Proton donor. Positions 335 and 345 each coordinate Zn(2+).

The protein belongs to the cytidine and deoxycytidylate deaminase family. The cofactor is Zn(2+).

The protein localises to the cytoplasm. It is found in the nucleus. The enzyme catalyses 2,5-diamino-6-hydroxy-4-(5-phosphoribosylamino)-pyrimidine + H2O + H(+) = 5-amino-6-(5-phospho-D-ribosylamino)uracil + NH4(+). It participates in cofactor biosynthesis; riboflavin biosynthesis; 5-amino-6-(D-ribitylamino)uracil from GTP: step 2/4. In terms of biological role, involved in riboflavin biosynthesis. Converts 2,5-diamino-6-(ribosylamino)-4(3H)-pyrimidinone 5'-phosphate into 5-amino-6-(ribosylamino)-2,4(1H,3H)-pyrimidinedione 5'-phosphate. This is Diaminohydroxyphosphoribosylamino-pyrimidine deaminase from Schizosaccharomyces pombe (strain 972 / ATCC 24843) (Fission yeast).